A 453-amino-acid polypeptide reads, in one-letter code: tRNA(Ile)-lysidine synthase (453 aa).

27 to 32 contributes to the ATP binding site; sequence SGGSDS.

The protein belongs to the tRNA(Ile)-lysidine synthase family.

It is found in the cytoplasm. It carries out the reaction cytidine(34) in tRNA(Ile2) + L-lysine + ATP = lysidine(34) in tRNA(Ile2) + AMP + diphosphate + H(+). Functionally, ligates lysine onto the cytidine present at position 34 of the AUA codon-specific tRNA(Ile) that contains the anticodon CAU, in an ATP-dependent manner. Cytidine is converted to lysidine, thus changing the amino acid specificity of the tRNA from methionine to isoleucine. The sequence is that of tRNA(Ile)-lysidine synthase from Rhizobium meliloti (strain 1021) (Ensifer meliloti).